The following is a 298-amino-acid chain: Elongation factor Ts (298 aa).

Positions 79–82 (TDFV) are involved in Mg(2+) ion dislocation from EF-Tu.

It belongs to the EF-Ts family.

The protein resides in the cytoplasm. Associates with the EF-Tu.GDP complex and induces the exchange of GDP to GTP. It remains bound to the aminoacyl-tRNA.EF-Tu.GTP complex up to the GTP hydrolysis stage on the ribosome. The sequence is that of Elongation factor Ts from Cereibacter sphaeroides (strain ATCC 17025 / ATH 2.4.3) (Rhodobacter sphaeroides).